We begin with the raw amino-acid sequence, 205 residues long: Disintegrin-like leberagin-C (205 aa).

In terms of domain architecture, Disintegrin spans 4–90 (PPVCGNELLE…DCPIDRFHRN (87 aa)). 9 disulfides stabilise this stretch: Cys-7–Cys-26, Cys-18–Cys-36, Cys-62–Cys-82, Cys-69–Cys-94, Cys-101–Cys-106, Cys-113–Cys-128, Cys-151–Cys-158, Cys-163–Cys-171, and Cys-193–Cys-198. The short motif at 68-70 (ECD) is the D/ECD-tripeptide element. Asn-120 carries N-linked (GlcNAc...) asparagine glycosylation.

Belongs to the venom metalloproteinase (M12B) family. P-III subfamily. P-IIIb sub-subfamily. As to quaternary structure, monomer. In terms of tissue distribution, expressed by the venom gland.

Its subcellular location is the secreted. Its function is as follows. Inhibits platelet aggregation induced by thrombin and arachidonic acid with IC(50) of 40 and 50 nM respectively (in rabbit platetelet-rich plasma). It also inhibits the adhesion of melanoma tumor cells on fibrinogen and fibronectin, by interfering with the function of alpha-V/beta-3 (ITGAV/ITGB3) and, to a lesser extent, with alpha-V/beta-6 (ITGAV/ITGB6) and alpha-5/beta-1 (ITGA5/ITGB1) integrins. In Macrovipera lebetina transmediterranea (Blunt-nosed viper), this protein is Disintegrin-like leberagin-C.